The chain runs to 177 residues: MSVADTIARPYAQAIFEIAIENNTIEKWKNILIFIKTIASHKKFKNFLSGSISPKYLSLIFITIGTNIIDENAKNLIKLLSENQRFNILNNIFERFVKLEACYKNIIIVQLKSAFSLKENHINKIRKVLERFFLKKTKIIYKVDPNILNGMIVKVNNTIFDLSAQNHLKQLSDSLNF.

It belongs to the ATPase delta chain family. As to quaternary structure, F-type ATPases have 2 components, F(1) - the catalytic core - and F(0) - the membrane proton channel. F(1) has five subunits: alpha(3), beta(3), gamma(1), delta(1), epsilon(1). F(0) has three main subunits: a(1), b(2) and c(10-14). The alpha and beta chains form an alternating ring which encloses part of the gamma chain. F(1) is attached to F(0) by a central stalk formed by the gamma and epsilon chains, while a peripheral stalk is formed by the delta and b chains.

Its subcellular location is the cell membrane. In terms of biological role, f(1)F(0) ATP synthase produces ATP from ADP in the presence of a proton or sodium gradient. F-type ATPases consist of two structural domains, F(1) containing the extramembraneous catalytic core and F(0) containing the membrane proton channel, linked together by a central stalk and a peripheral stalk. During catalysis, ATP synthesis in the catalytic domain of F(1) is coupled via a rotary mechanism of the central stalk subunits to proton translocation. This protein is part of the stalk that links CF(0) to CF(1). It either transmits conformational changes from CF(0) to CF(1) or is implicated in proton conduction. This Buchnera aphidicola subsp. Acyrthosiphon pisum (strain 5A) protein is ATP synthase subunit delta.